The following is a 483-amino-acid chain: E3 ubiquitin-protein ligase TRIM50 (483 aa).

Residues 16–57 (CPICLEVFKEPLMLQCGHSYCKNCLDSLSEHLDSELRCPVCR) form an RING-type zinc finger. The B box-type zinc finger occupies 84-125 (TEPTVCVHHRNPLSLFCEKDQEFICGLCGLLGSHQHHRVTPV). The Zn(2+) site is built by C89, H92, C111, and H117. 2 coiled-coil regions span residues 127-169 (TVYS…NESD) and 203-236 (GLVASLDMQLEQAQGTQERLAQAERVLEQFGNES). The 200-residue stretch at 275-474 (DIKLTVWKRL…LPMVLPPPSA (200 aa)) folds into the B30.2/SPRY domain. Position 372 is an N6-acetyllysine (K372).

It belongs to the TRIM/RBCC family. In terms of assembly, can form dimers and trimers. Interacts with several E2 ubiquitin-conjugating enzymes, including UBE2L6, UBE2E1, UBE2E3. No interaction with UBE2H. Interacts with BECN1. Interacts with SQSTM1. Interacts with NLRP3. Auto-ubiquitinated. Post-translationally, acetylated by EP300 and KAT2B. HDAC6 drives TRIM50 deacetylation. Acetylation antagonizes with TRIM50 ubiquitination.

The protein localises to the cytoplasm. The catalysed reaction is S-ubiquitinyl-[E2 ubiquitin-conjugating enzyme]-L-cysteine + [acceptor protein]-L-lysine = [E2 ubiquitin-conjugating enzyme]-L-cysteine + N(6)-ubiquitinyl-[acceptor protein]-L-lysine.. Functionally, E3 ubiquitin-protein ligase that ubiquitinates Beclin-1/BECN1 in a 'Lys-63'-dependent manner enhancing its binding to ULK1. In turn, promotes starvation-induced autophagy activation. Also interacts with p62/SQSTM1 protein and thereby induces the formation and the autophagy clearance of aggresome-associated polyubiquitinated proteins through HDAC6 interaction. Also promotes NLRP3 inflammasome activation by directly inducing NLRP3 oligomerization independent of its E3 ligase function. This chain is E3 ubiquitin-protein ligase TRIM50 (Trim50), found in Rattus norvegicus (Rat).